The following is a 358-amino-acid chain: MATAIRSGRIGGWERFCQWVTDTNNRIYVGWFGVLMIPCLLAATTCFIVAFIAAPAVDIDGIREPVAGSLIYGNNIISGAVVPSSNAIGLHFYPIWEAASLDEWLYNGGPYQLVVFHFLIGISAYMGRQWELSYRLGMRPWICVAYSAPLSAAFAVFLVYPFGQGSFSDGMPLGISGTFNFMLVFQAEHNILMHPFHMLGVAGVFGGSLFSAMHGSLVTSSLVRETTEAESQNYGYKFGQEEETYNIVAAHGYFGRLIFQYASFNNSRSLHFFLAAWPVVGIWFTSMGISTMAFNLNGFNFNQSVLDAQGRVLNTWADVLNRANLGMEVMHERNAHNFPLDLAATESTPVALQAPTIG.

3 helical membrane passes run 28–45 (YVGWFGVLMIPCLLAATT), 117–132 (HFLIGISAYMGRQWEL), and 141–155 (WICVAYSAPLSAAFA). His-117 is a binding site for chlorophyll a. Tyr-125 is a binding site for pheophytin a. The [CaMn4O5] cluster site is built by Asp-169 and Glu-188. The helical transmembrane segment at 196–217 (FHMLGVAGVFGGSLFSAMHGSL) threads the bilayer. His-197 provides a ligand contact to chlorophyll a. Residues His-214 and 263–264 (SF) each bind a quinone. His-214 is a Fe cation binding site. His-271 is a Fe cation binding site. The chain crosses the membrane as a helical span at residues 273-287 (FLAAWPVVGIWFTSM). The [CaMn4O5] cluster site is built by His-331, Glu-332, Asp-341, and Ala-343. The propeptide occupies 344–358 (ATESTPVALQAPTIG).

Belongs to the reaction center PufL/M/PsbA/D family. As to quaternary structure, PSII is composed of 1 copy each of membrane proteins PsbA, PsbB, PsbC, PsbD, PsbE, PsbF, PsbH, PsbI, PsbJ, PsbK, PsbL, PsbM, PsbT, PsbX, PsbY, PsbZ, Psb30/Ycf12, peripheral proteins PsbO, CyanoQ (PsbQ), PsbU, PsbV and a large number of cofactors. It forms dimeric complexes. The D1/D2 heterodimer binds P680, chlorophylls that are the primary electron donor of PSII, and subsequent electron acceptors. It shares a non-heme iron and each subunit binds pheophytin, quinone, additional chlorophylls, carotenoids and lipids. D1 provides most of the ligands for the Mn4-Ca-O5 cluster of the oxygen-evolving complex (OEC). There is also a Cl(-1) ion associated with D1 and D2, which is required for oxygen evolution. The PSII complex binds additional chlorophylls, carotenoids and specific lipids. is required as a cofactor. Post-translationally, tyr-160 forms a radical intermediate that is referred to as redox-active TyrZ, YZ or Y-Z. C-terminally processed by CtpA; processing is essential to allow assembly of the oxygen-evolving complex and thus photosynthetic growth.

It is found in the cellular thylakoid membrane. The enzyme catalyses 2 a plastoquinone + 4 hnu + 2 H2O = 2 a plastoquinol + O2. Functionally, photosystem II (PSII) is a light-driven water:plastoquinone oxidoreductase that uses light energy to abstract electrons from H(2)O, generating O(2) and a proton gradient subsequently used for ATP formation. It consists of a core antenna complex that captures photons, and an electron transfer chain that converts photonic excitation into a charge separation. The D1/D2 (PsbA/PsbD) reaction center heterodimer binds P680, the primary electron donor of PSII as well as several subsequent electron acceptors. The chain is Photosystem II protein D1 2 from Synechococcus sp. (strain WH7803).